A 165-amino-acid chain; its full sequence is Xanthine-guanine phosphoribosyltransferase (165 aa).

Residues 41 to 42 (RG) and 98 to 106 (DDLTDTGKT) each bind 5-phospho-alpha-D-ribose 1-diphosphate. Asp-99 serves as a coordination point for Mg(2+). Residues Asp-102 and Ile-145 each coordinate guanine. Xanthine-binding residues include Asp-102 and Ile-145. GMP is bound by residues 102–106 (DTGKT) and 144–145 (WI).

This sequence belongs to the purine/pyrimidine phosphoribosyltransferase family. XGPT subfamily. As to quaternary structure, homotetramer. It depends on Mg(2+) as a cofactor.

The protein resides in the cell inner membrane. The enzyme catalyses GMP + diphosphate = guanine + 5-phospho-alpha-D-ribose 1-diphosphate. It carries out the reaction XMP + diphosphate = xanthine + 5-phospho-alpha-D-ribose 1-diphosphate. The catalysed reaction is IMP + diphosphate = hypoxanthine + 5-phospho-alpha-D-ribose 1-diphosphate. Its pathway is purine metabolism; GMP biosynthesis via salvage pathway; GMP from guanine: step 1/1. It participates in purine metabolism; XMP biosynthesis via salvage pathway; XMP from xanthine: step 1/1. In terms of biological role, purine salvage pathway enzyme that catalyzes the transfer of the ribosyl-5-phosphate group from 5-phospho-alpha-D-ribose 1-diphosphate (PRPP) to the N9 position of the 6-oxopurines guanine and xanthine to form the corresponding ribonucleotides GMP (guanosine 5'-monophosphate) and XMP (xanthosine 5'-monophosphate), with the release of PPi. To a lesser extent, also acts on hypoxanthine. This chain is Xanthine-guanine phosphoribosyltransferase, found in Agrobacterium fabrum (strain C58 / ATCC 33970) (Agrobacterium tumefaciens (strain C58)).